We begin with the raw amino-acid sequence, 215 residues long: Small ribosomal subunit protein uS3 (215 aa).

One can recognise a KH type-2 domain in the interval 38–106; that stretch reads LRAFLKKKLF…EVLIDIQEIR (69 aa).

Belongs to the universal ribosomal protein uS3 family. In terms of assembly, part of the 30S ribosomal subunit. Forms a tight complex with proteins S10 and S14.

In terms of biological role, binds the lower part of the 30S subunit head. Binds mRNA in the 70S ribosome, positioning it for translation. The chain is Small ribosomal subunit protein uS3 from Desulforapulum autotrophicum (strain ATCC 43914 / DSM 3382 / VKM B-1955 / HRM2) (Desulfobacterium autotrophicum).